The primary structure comprises 222 residues: Deoxyribose-phosphate aldolase (222 aa).

The active-site Proton donor/acceptor is Asp91. The active-site Schiff-base intermediate with acetaldehyde is the Lys153. Catalysis depends on Lys182, which acts as the Proton donor/acceptor.

It belongs to the DeoC/FbaB aldolase family. DeoC type 1 subfamily.

It is found in the cytoplasm. It carries out the reaction 2-deoxy-D-ribose 5-phosphate = D-glyceraldehyde 3-phosphate + acetaldehyde. It participates in carbohydrate degradation; 2-deoxy-D-ribose 1-phosphate degradation; D-glyceraldehyde 3-phosphate and acetaldehyde from 2-deoxy-alpha-D-ribose 1-phosphate: step 2/2. Functionally, catalyzes a reversible aldol reaction between acetaldehyde and D-glyceraldehyde 3-phosphate to generate 2-deoxy-D-ribose 5-phosphate. This Mycoplasma capricolum subsp. capricolum (strain California kid / ATCC 27343 / NCTC 10154) protein is Deoxyribose-phosphate aldolase.